We begin with the raw amino-acid sequence, 773 residues long: Mitochondrial inner membrane m-AAA protease component yta12 (773 aa).

The disordered stretch occupies residues 83–119 (FSVTSKRSQNGSSGSNSDANGRKNGQKNDDSKKKGLN). Low complexity predominate over residues 87–101 (SKRSQNGSSGSNSDA). Helical transmembrane passes span 126–146 (VFEI…AYIL) and 239–259 (VLAT…VIYL). Val-298, Ala-299, Thr-340, Gly-341, Lys-342, Thr-343, Leu-344, and His-479 together coordinate ATP. His-561 is a binding site for Zn(2+). Glu-562 is a catalytic residue. Zn(2+) contacts are provided by His-565 and Asp-638. A disordered region spans residues 752–773 (EYKNDHDPRNPPIPPSPQQPSA). Pro residues predominate over residues 761-773 (NPPIPPSPQQPSA).

It in the N-terminal section; belongs to the AAA ATPase family. In the C-terminal section; belongs to the peptidase M41 family. Component of the m-AAA protease complex. Zn(2+) is required as a cofactor.

The protein localises to the mitochondrion membrane. It carries out the reaction ATP + H2O = ADP + phosphate + H(+). Catalytic component of the m-AAA protease, a protease that plays a key role in proteostasis of inner mitochondrial membrane proteins. Possesses both ATPase and protease activities: the ATPase activity is required to unfold substrates, threading them into the internal proteolytic cavity for hydrolysis into small peptide fragments. The complex is necessary for the assembly of mitochondrial respiratory chain and ATPase complexes. The m-AAA protease carries out protein quality control in the inner membrane of the mitochondria by mediating degradation of mistranslated or misfolded polypeptides. It also mediates protein maturation of the mitochondrial ribosomal subunit mrpl32/bL32m by catalyzing the cleavage of the presequence of mrpl32/bL32m prior to assembly into the mitochondrial ribosome. Also acts as a membrane protein dislocase: required to dislocate moderately hydrophobic transmembrane segments from the membrane. In Schizosaccharomyces pombe (strain 972 / ATCC 24843) (Fission yeast), this protein is Mitochondrial inner membrane m-AAA protease component yta12 (yta12).